Consider the following 263-residue polypeptide: Formamidopyrimidine-DNA glycosylase (263 aa).

Catalysis depends on Pro-2, which acts as the Schiff-base intermediate with DNA. The Proton donor role is filled by Glu-3. The active-site Proton donor; for beta-elimination activity is the Lys-59. DNA-binding residues include His-93 and Arg-111. The segment at 229 to 263 (KVYGKNGSLCVRCNNVLIRERHAGRSTHYCPHCQK) adopts an FPG-type zinc-finger fold. Arg-253 serves as the catalytic Proton donor; for delta-elimination activity.

It belongs to the FPG family. In terms of assembly, monomer. The cofactor is Zn(2+).

It catalyses the reaction Hydrolysis of DNA containing ring-opened 7-methylguanine residues, releasing 2,6-diamino-4-hydroxy-5-(N-methyl)formamidopyrimidine.. It carries out the reaction 2'-deoxyribonucleotide-(2'-deoxyribose 5'-phosphate)-2'-deoxyribonucleotide-DNA = a 3'-end 2'-deoxyribonucleotide-(2,3-dehydro-2,3-deoxyribose 5'-phosphate)-DNA + a 5'-end 5'-phospho-2'-deoxyribonucleoside-DNA + H(+). Involved in base excision repair of DNA damaged by oxidation or by mutagenic agents. Acts as a DNA glycosylase that recognizes and removes damaged bases. Has a preference for oxidized purines, such as 7,8-dihydro-8-oxoguanine (8-oxoG). Has AP (apurinic/apyrimidinic) lyase activity and introduces nicks in the DNA strand. Cleaves the DNA backbone by beta-delta elimination to generate a single-strand break at the site of the removed base with both 3'- and 5'-phosphates. The chain is Formamidopyrimidine-DNA glycosylase from Carboxydothermus hydrogenoformans (strain ATCC BAA-161 / DSM 6008 / Z-2901).